Consider the following 493-residue polypeptide: Dipeptide permease D (493 aa).

The next 13 membrane-spanning stretches (helical) occupy residues 14-34 (VVAL…LLIL), 49-69 (ELFS…GYLA), 91-111 (LVLG…AIIV), 138-158 (GGFS…PIAC), 167-187 (WAMG…IFLC), 212-232 (NWGW…VLFW), 235-255 (WSVY…AKIY), 267-287 (LGLI…AQQG), 312-332 (MFQS…AWLV), 344-364 (IWGK…ILTL), 379-399 (LMVL…PVAM), 413-433 (VLTG…AGVI), and 458-478 (VFEQ…LIWL).

The protein belongs to the major facilitator superfamily. Proton-dependent oligopeptide transporter (POT/PTR) (TC 2.A.17) family. DtpD subfamily.

It localises to the cell inner membrane. Probable proton-dependent permease that transports dipeptides. The sequence is that of Dipeptide permease D from Salmonella choleraesuis (strain SC-B67).